We begin with the raw amino-acid sequence, 115 residues long: NADH-ubiquinone oxidoreductase chain 3 (115 aa).

A run of 3 helical transmembrane segments spans residues leucine 3–tryptophan 23, phenylalanine 55–leucine 75, and leucine 84–tyrosine 104.

Belongs to the complex I subunit 3 family. In terms of assembly, core subunit of respiratory chain NADH dehydrogenase (Complex I) which is composed of 45 different subunits. Interacts with TMEM186. Interacts with TMEM242.

It is found in the mitochondrion inner membrane. It catalyses the reaction a ubiquinone + NADH + 5 H(+)(in) = a ubiquinol + NAD(+) + 4 H(+)(out). Functionally, core subunit of the mitochondrial membrane respiratory chain NADH dehydrogenase (Complex I) which catalyzes electron transfer from NADH through the respiratory chain, using ubiquinone as an electron acceptor. Essential for the catalytic activity of complex I. The chain is NADH-ubiquinone oxidoreductase chain 3 from Equus asinus (Donkey).